We begin with the raw amino-acid sequence, 804 residues long: Probable replication endonuclease from prophage-like region 2 (804 aa).

Catalysis depends on O-(5'-phospho-DNA)-tyrosine intermediate residues Y503 and Y507.

The protein belongs to the phage GPA family.

Functionally, possible endonuclease which induces a single-strand cut and initiates DNA replication. In Salmonella typhi, this protein is Probable replication endonuclease from prophage-like region 2.